Reading from the N-terminus, the 130-residue chain is Small ribosomal subunit protein uS9 (130 aa).

Residues 109 to 130 (RMKERKKYGLKAARRAPQFSKR) form a disordered region. The span at 111 to 130 (KERKKYGLKAARRAPQFSKR) shows a compositional bias: basic residues.

This sequence belongs to the universal ribosomal protein uS9 family.

The protein is Small ribosomal subunit protein uS9 of Lachnoclostridium phytofermentans (strain ATCC 700394 / DSM 18823 / ISDg) (Clostridium phytofermentans).